The primary structure comprises 274 residues: 4-diphosphocytidyl-2-C-methyl-D-erythritol kinase (274 aa).

Lysine 10 is a catalytic residue. An ATP-binding site is contributed by 101–111; the sequence is PTQAGLGGGSA. Residue aspartate 143 is part of the active site.

This sequence belongs to the GHMP kinase family. IspE subfamily.

The enzyme catalyses 4-CDP-2-C-methyl-D-erythritol + ATP = 4-CDP-2-C-methyl-D-erythritol 2-phosphate + ADP + H(+). It functions in the pathway isoprenoid biosynthesis; isopentenyl diphosphate biosynthesis via DXP pathway; isopentenyl diphosphate from 1-deoxy-D-xylulose 5-phosphate: step 3/6. Functionally, catalyzes the phosphorylation of the position 2 hydroxy group of 4-diphosphocytidyl-2C-methyl-D-erythritol. The chain is 4-diphosphocytidyl-2-C-methyl-D-erythritol kinase from Helicobacter pylori (strain J99 / ATCC 700824) (Campylobacter pylori J99).